A 256-amino-acid chain; its full sequence is Pimeloyl-[acyl-carrier protein] methyl ester esterase (256 aa).

One can recognise an AB hydrolase-1 domain in the interval 15–242; sequence HLVLLHGWGL…AAHAPFISHP (228 aa). Residues Trp-22, 82–83, and 143–147 contribute to the substrate site; these read SL and FLALQ. The active-site Nucleophile is the Ser-82. Catalysis depends on residues Asp-207 and His-235. His-235 lines the substrate pocket.

It belongs to the AB hydrolase superfamily. Carboxylesterase BioH family. As to quaternary structure, monomer.

Its subcellular location is the cytoplasm. The enzyme catalyses 6-carboxyhexanoyl-[ACP] methyl ester + H2O = 6-carboxyhexanoyl-[ACP] + methanol + H(+). The protein operates within cofactor biosynthesis; biotin biosynthesis. Functionally, the physiological role of BioH is to remove the methyl group introduced by BioC when the pimeloyl moiety is complete. It allows to synthesize pimeloyl-ACP via the fatty acid synthetic pathway through the hydrolysis of the ester bonds of pimeloyl-ACP esters. This Escherichia fergusonii (strain ATCC 35469 / DSM 13698 / CCUG 18766 / IAM 14443 / JCM 21226 / LMG 7866 / NBRC 102419 / NCTC 12128 / CDC 0568-73) protein is Pimeloyl-[acyl-carrier protein] methyl ester esterase.